A 186-amino-acid polypeptide reads, in one-letter code: MAKPAVFLDRDGVINVDHGYVHDEHDFQFIEGVFEATAALQRMGYLLVLVTNQSGIARGKFSEERFISLTQWMDWNFADNGVEFDGIYYCPHHAEHGIGQYKEECDCRKPKPGMFLSARDFLNIDMANSVMVGDKAEDMMAAEAAGVGTKILVRTGKPITEQGEALATVVLDSIRDVPHYLLRVKK.

Asp9 (nucleophile) is an active-site residue. Mg(2+) is bound by residues Asp9 and Asp11. Substrate contacts are provided by residues 9–11 (DRD), 17–20 (DHGY), and 51–54 (TNQS). The Proton donor role is filled by Asp11. Cys90, His92, Cys105, and Cys107 together coordinate Zn(2+). 108–109 (RK) lines the substrate pocket. 2 residues coordinate Mg(2+): Asp134 and Lys135. Lys135 contributes to the substrate binding site.

This sequence belongs to the GmhB family. In terms of assembly, monomer. Mg(2+) serves as cofactor. The cofactor is Zn(2+).

It localises to the cytoplasm. The catalysed reaction is D-glycero-beta-D-manno-heptose 1,7-bisphosphate + H2O = D-glycero-beta-D-manno-heptose 1-phosphate + phosphate. It participates in nucleotide-sugar biosynthesis; ADP-L-glycero-beta-D-manno-heptose biosynthesis; ADP-L-glycero-beta-D-manno-heptose from D-glycero-beta-D-manno-heptose 7-phosphate: step 2/4. Its pathway is bacterial outer membrane biogenesis; LPS core biosynthesis. Functionally, converts the D-glycero-beta-D-manno-heptose 1,7-bisphosphate intermediate into D-glycero-beta-D-manno-heptose 1-phosphate by removing the phosphate group at the C-7 position in vitro. Also catalyzes the dephosphorylation of D-glycero-alpha-D-manno-heptose-1,7-bisphosphate in vitro. In Vibrio cholerae serotype O1 (strain ATCC 39315 / El Tor Inaba N16961), this protein is D-glycero-beta-D-manno-heptose-1,7-bisphosphate 7-phosphatase (gmhB).